Here is a 148-residue protein sequence, read N- to C-terminus: 15 kDa excretory/secretory protein (148 aa).

Positions 1–19 (MFFAFAVLLIALATREAYG) are cleaved as a signal peptide.

It to T.colubriformis 30 kDa antigenic glycoprotein.

It is found in the secreted. The sequence is that of 15 kDa excretory/secretory protein from Haemonchus contortus (Barber pole worm).